Here is an 89-residue protein sequence, read N- to C-terminus: Small ribosomal subunit protein uS14A (89 aa).

Belongs to the universal ribosomal protein uS14 family. In terms of assembly, part of the 30S ribosomal subunit. Contacts proteins S3 and S10.

Binds 16S rRNA, required for the assembly of 30S particles and may also be responsible for determining the conformation of the 16S rRNA at the A site. This is Small ribosomal subunit protein uS14A from Staphylococcus epidermidis (strain ATCC 35984 / DSM 28319 / BCRC 17069 / CCUG 31568 / BM 3577 / RP62A).